The chain runs to 607 residues: Autophagy-related protein 22-2 (607 aa).

Residues 1–29 (MTVAPPSPNSPAAELQQRPPRYPGEDTTP) are disordered. The helical transmembrane segment at 41–61 (YGIAAEVFAVCGVGSFLPLTL) threads the bilayer. The N-linked (GlcNAc...) asparagine glycan is linked to Asn89. A run of 3 helical transmembrane segments spans residues 119–139 (SFAM…LISF), 151–170 (TLLL…FVFI), and 188–208 (CLGS…ANDP). The interval 235–263 (SFSASDAESGPHPAAEAGSGTSSGPASPE) is disordered. Residues 247–263 (PAAEAGSGTSSGPASPE) show a composition bias toward low complexity. 4 helical membrane-spanning segments follow: residues 274–294 (GVGL…SLLF), 307–327 (TLPL…FTMV), 379–399 (VLVF…VSGT), and 415–435 (VGLL…LWPV). Asn445 carries an N-linked (GlcNAc...) asparagine glycan. 4 consecutive transmembrane segments (helical) span residues 450 to 470 (LCIA…IPVF), 485 to 507 (FPLA…SFFG), 519 to 541 (YALY…GMLI), and 550 to 570 (GFFF…IVNA). The disordered stretch occupies residues 586-607 (KGHETEMSEQTEEAEGLLARGI).

The protein belongs to the ATG22 family.

Its subcellular location is the vacuole membrane. Vacuolar effluxer which mediate the efflux of amino acids resulting from autophagic degradation. The release of autophagic amino acids allows the maintenance of protein synthesis and viability during nitrogen starvation. This is Autophagy-related protein 22-2 (atg22-2) from Aspergillus oryzae (strain ATCC 42149 / RIB 40) (Yellow koji mold).